The following is a 345-amino-acid chain: Phosphoribosylformylglycinamidine cyclo-ligase (345 aa).

Belongs to the AIR synthase family.

Its subcellular location is the cytoplasm. The enzyme catalyses 2-formamido-N(1)-(5-O-phospho-beta-D-ribosyl)acetamidine + ATP = 5-amino-1-(5-phospho-beta-D-ribosyl)imidazole + ADP + phosphate + H(+). It participates in purine metabolism; IMP biosynthesis via de novo pathway; 5-amino-1-(5-phospho-D-ribosyl)imidazole from N(2)-formyl-N(1)-(5-phospho-D-ribosyl)glycinamide: step 2/2. The polypeptide is Phosphoribosylformylglycinamidine cyclo-ligase (Limosilactobacillus fermentum (strain NBRC 3956 / LMG 18251) (Lactobacillus fermentum)).